The following is a 460-amino-acid chain: Orexin receptor type 2 (460 aa).

The Extracellular portion of the chain corresponds to 1–54 (MSSTKLEDSLSRRNWSSASELNETQEPFLNPTDYDDEEFLRYLWREYLHPKEYE). Residues N14 and N22 are each glycosylated (N-linked (GlcNAc...) asparagine). The tract at residues 33–49 (DYDDEEFLRYLWREYLH) is required for response to orexin-A. Residues 55-75 (WVLIAGYIIVFVVALIGNVLV) traverse the membrane as a helical segment. The Cytoplasmic segment spans residues 76–88 (CVAVWKNHHMRTV). A helical membrane pass occupies residues 89 to 110 (TNYFIVNLSLADVLVTITCLPA). At 111–127 (TLVVDITETWFFGQSLC) the chain is on the extracellular side. A disulfide bridge connects residues C127 and C210. A helical transmembrane segment spans residues 128–150 (KVIPYLQTVSVSVSVLTLSCIAL). The Cytoplasmic portion of the chain corresponds to 151–170 (DRWYAICHPLMFKSTAKRAR). Residues 171 to 191 (NSIVVIWIVSCIIMIPQAIVM) traverse the membrane as a helical segment. At 192–222 (ECSSMLPGLANKTTLFTVCDEHWGGEVYPKM) the chain is on the extracellular side. The N-linked (GlcNAc...) asparagine glycan is linked to N202. The chain crosses the membrane as a helical span at residues 223 to 243 (YHICFFLVTYMAPLCLMILAY). At 244-304 (LQIFRKLWCR…QIRARRKTAR (61 aa)) the chain is on the cytoplasmic side. Residues 305–326 (MLMVVLLVFAICYLPISILNVL) traverse the membrane as a helical segment. The Extracellular portion of the chain corresponds to 327 to 342 (KRVFGMFTHTEDRETV). The helical transmembrane segment at 343–366 (YAWFTFSHWLVYANSAANPIIYNF) threads the bilayer. At 367-460 (LSGKFREEFK…SSLLSTWLEV (94 aa)) the chain is on the cytoplasmic side.

Belongs to the G-protein coupled receptor 1 family. Widely expressed. Isoform 2 not detected in skeletal muscle and kidney.

It localises to the cell membrane. Its function is as follows. Nonselective, high-affinity receptor for both orexin-A and orexin-B neuropeptides. Triggers an increase in cytoplasmic Ca(2+) levels in response to orexin-A binding. The polypeptide is Orexin receptor type 2 (Hcrtr2) (Mus musculus (Mouse)).